The sequence spans 212 residues: Large ribosomal subunit protein bL25 (212 aa).

A disordered region spans residues 1–25; it reads MSQSTIHKIAVKKRTETGKNENNRL. Over residues 13 to 24 the composition is skewed to basic and acidic residues; sequence KRTETGKNENNR.

It belongs to the bacterial ribosomal protein bL25 family. CTC subfamily. In terms of assembly, part of the 50S ribosomal subunit; part of the 5S rRNA/L5/L18/L25 subcomplex. Contacts the 5S rRNA. Binds to the 5S rRNA independently of L5 and L18.

In terms of biological role, this is one of the proteins that binds to the 5S RNA in the ribosome where it forms part of the central protuberance. The sequence is that of Large ribosomal subunit protein bL25 from Leptospira borgpetersenii serovar Hardjo-bovis (strain JB197).